The chain runs to 278 residues: S-methyl-5'-thioadenosine phosphorylase (278 aa).

Phosphate-binding positions include serine 13, 55 to 56 (RH), and 88 to 89 (TA). Methionine 190 serves as a coordination point for substrate. Phosphate is bound at residue threonine 191. 214–216 (DYD) lines the substrate pocket.

It belongs to the PNP/MTAP phosphorylase family. MTAP subfamily. As to quaternary structure, homotrimer.

Its subcellular location is the cytoplasm. The protein localises to the nucleus. The enzyme catalyses S-methyl-5'-thioadenosine + phosphate = 5-(methylsulfanyl)-alpha-D-ribose 1-phosphate + adenine. It participates in amino-acid biosynthesis; L-methionine biosynthesis via salvage pathway; S-methyl-5-thio-alpha-D-ribose 1-phosphate from S-methyl-5'-thioadenosine (phosphorylase route): step 1/1. Catalyzes the reversible phosphorylation of S-methyl-5'-thioadenosine (MTA) to adenine and 5-methylthioribose-1-phosphate. Involved in the breakdown of MTA, a major by-product of polyamine biosynthesis. Responsible for the first step in the methionine salvage pathway after MTA has been generated from S-adenosylmethionine. Has broad substrate specificity with 6-aminopurine nucleosides as preferred substrates. The polypeptide is S-methyl-5'-thioadenosine phosphorylase (Anopheles gambiae (African malaria mosquito)).